Here is a 311-residue protein sequence, read N- to C-terminus: ATP synthase gamma chain (311 aa).

C67 and C138 form a disulfide bridge.

It belongs to the ATPase gamma chain family. In terms of assembly, F-type ATPases have 2 components, CF(1) - the catalytic core - and CF(0) - the membrane proton channel. CF(1) has five subunits: alpha(3), beta(3), gamma(1), delta(1), epsilon(1). CF(0) has three main subunits: a, b and c.

It is found in the cellular thylakoid membrane. Its activity is regulated as follows. Thiol-modulation by raising the activation threshold of the enzyme upon oxidation of the cysteines, thereby preventing wasteful ATP-hydrolysis. Functionally, produces ATP from ADP in the presence of a proton gradient across the membrane. The gamma chain is believed to be important in regulating ATPase activity and the flow of protons through the CF(0) complex. This is ATP synthase gamma chain (atpG) from Arthrospira platensis (Spirulina platensis).